Consider the following 70-residue polypeptide: Putative membrane protein insertion efficiency factor (70 aa).

It belongs to the UPF0161 family.

It localises to the cell membrane. Functionally, could be involved in insertion of integral membrane proteins into the membrane. The polypeptide is Putative membrane protein insertion efficiency factor (Lachnoclostridium phytofermentans (strain ATCC 700394 / DSM 18823 / ISDg) (Clostridium phytofermentans)).